A 116-amino-acid polypeptide reads, in one-letter code: NADH-ubiquinone oxidoreductase chain 3 (116 aa).

Helical transmembrane passes span 6–26 (FMLL…FWLA), 56–76 (FFLV…LLPL), and 85–105 (PLLT…GLVY).

It belongs to the complex I subunit 3 family.

It is found in the mitochondrion membrane. It catalyses the reaction a ubiquinone + NADH + 5 H(+)(in) = a ubiquinol + NAD(+) + 4 H(+)(out). Its function is as follows. Core subunit of the mitochondrial membrane respiratory chain NADH dehydrogenase (Complex I) that is believed to belong to the minimal assembly required for catalysis. Complex I functions in the transfer of electrons from NADH to the respiratory chain. The immediate electron acceptor for the enzyme is believed to be ubiquinone. The sequence is that of NADH-ubiquinone oxidoreductase chain 3 (MT-ND3) from Struthio camelus (Common ostrich).